Here is a 169-residue protein sequence, read N- to C-terminus: Peptide deformylase (169 aa).

Positions 91 and 133 each coordinate Fe cation. Glu-134 is an active-site residue. A Fe cation-binding site is contributed by His-137.

This sequence belongs to the polypeptide deformylase family. It depends on Fe(2+) as a cofactor.

It catalyses the reaction N-terminal N-formyl-L-methionyl-[peptide] + H2O = N-terminal L-methionyl-[peptide] + formate. In terms of biological role, removes the formyl group from the N-terminal Met of newly synthesized proteins. Requires at least a dipeptide for an efficient rate of reaction. N-terminal L-methionine is a prerequisite for activity but the enzyme has broad specificity at other positions. In Salmonella typhi, this protein is Peptide deformylase.